Reading from the N-terminus, the 275-residue chain is Shikimate dehydrogenase (NADP(+)) (275 aa).

Residues 15–17 (SKS) and threonine 62 each bind shikimate. Lysine 66 acts as the Proton acceptor in catalysis. Glutamate 78 contacts NADP(+). 2 residues coordinate shikimate: asparagine 87 and aspartate 102. NADP(+) is bound by residues 128–132 (GAGGA), 151–156 (NRTAEK), and leucine 218. Shikimate is bound at residue tyrosine 220. Glycine 241 contributes to the NADP(+) binding site.

This sequence belongs to the shikimate dehydrogenase family. Homodimer.

The catalysed reaction is shikimate + NADP(+) = 3-dehydroshikimate + NADPH + H(+). Its pathway is metabolic intermediate biosynthesis; chorismate biosynthesis; chorismate from D-erythrose 4-phosphate and phosphoenolpyruvate: step 4/7. Its function is as follows. Involved in the biosynthesis of the chorismate, which leads to the biosynthesis of aromatic amino acids. Catalyzes the reversible NADPH linked reduction of 3-dehydroshikimate (DHSA) to yield shikimate (SA). This is Shikimate dehydrogenase (NADP(+)) from Shouchella clausii (strain KSM-K16) (Alkalihalobacillus clausii).